Reading from the N-terminus, the 1377-residue chain is DNA-directed RNA polymerase subunit beta'' (1377 aa).

The Zn(2+) site is built by cysteine 224, cysteine 294, cysteine 301, and cysteine 304.

It belongs to the RNA polymerase beta' chain family. RpoC2 subfamily. As to quaternary structure, in plastids the minimal PEP RNA polymerase catalytic core is composed of four subunits: alpha, beta, beta', and beta''. When a (nuclear-encoded) sigma factor is associated with the core the holoenzyme is formed, which can initiate transcription. Zn(2+) is required as a cofactor.

Its subcellular location is the plastid. The protein localises to the chloroplast. The catalysed reaction is RNA(n) + a ribonucleoside 5'-triphosphate = RNA(n+1) + diphosphate. In terms of biological role, DNA-dependent RNA polymerase catalyzes the transcription of DNA into RNA using the four ribonucleoside triphosphates as substrates. The sequence is that of DNA-directed RNA polymerase subunit beta'' from Calycanthus floridus var. glaucus (Eastern sweetshrub).